Reading from the N-terminus, the 652-residue chain is Endoplasmic reticulum chaperone BiP (652 aa).

The signal sequence occupies residues 1–16; sequence MRHLLLALLLLGGARA. Residues 34–37, Lys-94, 225–227, 291–298, and 362–365 each bind ATP; these read GTTY, GGT, EKAKRALS, and GSTR. The nucleotide-binding (NBD) stretch occupies residues 123 to 278; it reads KPHIQVDVGG…KKKTGKDVRK (156 aa). Residues 407–417 form an interdomain linker region; it reads QDTGDLVLLDV. The substrate-binding (SBD) stretch occupies residues 418-498; that stretch reads CPLTLGIETV…PRGVPQIEVT (81 aa). The segment at 630–652 is disordered; that stretch reads SKLYGSAGPPPTGEEEAAEKDEL. Residues 642–652 show a composition bias toward acidic residues; sequence GEEEAAEKDEL. The Prevents secretion from ER signature appears at 649–652; sequence KDEL.

It belongs to the heat shock protein 70 family. Monomer and homooligomer; homooligomerization via the interdomain linker inactivates the chaperone activity and acts as a storage of HSPA5/BiP molecules. Interacts with DNAJC10. Interacts with DNAJB9/ERdj4; leading to recruit HSPA5/BiP to ERN1/IRE1. Interacts with ERN1/IRE1; interaction takes place following interaction with DNAJB9/ERdj4 and leads to inactivate ERN1/IRE1.

It is found in the endoplasmic reticulum lumen. It localises to the melanosome. The protein localises to the cytoplasm. Its subcellular location is the cell surface. It carries out the reaction ATP + H2O = ADP + phosphate + H(+). With respect to regulation, the chaperone activity is regulated by ATP-induced allosteric coupling of the nucleotide-binding (NBD) and substrate-binding (SBD) domains. In the ADP-bound and nucleotide-free (apo) states, the two domains have little interaction. In contrast, in the ATP-bound state the two domains are tightly coupled, which results in drastically accelerated kinetics in both binding and release of polypeptide substrates. J domain-containing co-chaperones (DNAJB9/ERdj4 or DNAJC10/ERdj5) stimulate the ATPase activity and are required for efficient substrate recognition by HSPA5/BiP. Homooligomerization inactivates participating HSPA5/BiP protomers and probably act as reservoirs to store HSPA5/BiP molecules when they are not needed by the cell. Functionally, endoplasmic reticulum chaperone that plays a key role in protein folding and quality control in the endoplasmic reticulum lumen. Involved in the correct folding of proteins and degradation of misfolded proteins via its interaction with DNAJC10/ERdj5, probably to facilitate the release of DNAJC10/ERdj5 from its substrate. Acts as a key repressor of the EIF2AK3/PERK and ERN1/IRE1-mediated unfolded protein response (UPR). In the unstressed endoplasmic reticulum, recruited by DNAJB9/ERdj4 to the luminal region of ERN1/IRE1, leading to disrupt the dimerization of ERN1/IRE1, thereby inactivating ERN1/IRE1. Also binds and inactivates EIF2AK3/PERK in unstressed cells. Accumulation of misfolded protein in the endoplasmic reticulum causes release of HSPA5/BiP from ERN1/IRE1 and EIF2AK3/PERK, allowing their homodimerization and subsequent activation. May also play a role in apoptosis and cell proliferation. The sequence is that of Endoplasmic reticulum chaperone BiP from Gallus gallus (Chicken).